We begin with the raw amino-acid sequence, 553 residues long: Formate--tetrahydrofolate ligase (553 aa).

64–71 (TPAGEGKT) serves as a coordination point for ATP.

The protein belongs to the formate--tetrahydrofolate ligase family.

The enzyme catalyses (6S)-5,6,7,8-tetrahydrofolate + formate + ATP = (6R)-10-formyltetrahydrofolate + ADP + phosphate. The protein operates within one-carbon metabolism; tetrahydrofolate interconversion. The polypeptide is Formate--tetrahydrofolate ligase (Pseudothermotoga lettingae (strain ATCC BAA-301 / DSM 14385 / NBRC 107922 / TMO) (Thermotoga lettingae)).